We begin with the raw amino-acid sequence, 220 residues long: Putative 3-methyladenine DNA glycosylase (220 aa).

This sequence belongs to the DNA glycosylase MPG family.

This is Putative 3-methyladenine DNA glycosylase from Rickettsia bellii (strain RML369-C).